The primary structure comprises 358 residues: Peptide chain release factor 1 (358 aa).

Q233 carries the N5-methylglutamine modification. Over residues 282-306 (QRAASERSADRRGQVGSGDRSERVR) the composition is skewed to basic and acidic residues. The interval 282–308 (QRAASERSADRRGQVGSGDRSERVRTY) is disordered.

This sequence belongs to the prokaryotic/mitochondrial release factor family. Post-translationally, methylated by PrmC. Methylation increases the termination efficiency of RF1.

The protein localises to the cytoplasm. Peptide chain release factor 1 directs the termination of translation in response to the peptide chain termination codons UAG and UAA. The sequence is that of Peptide chain release factor 1 from Afipia carboxidovorans (strain ATCC 49405 / DSM 1227 / KCTC 32145 / OM5) (Oligotropha carboxidovorans).